The following is a 139-amino-acid chain: Putative nickel-responsive regulator (139 aa).

Histidine 79, histidine 90, histidine 92, and cysteine 98 together coordinate Ni(2+).

This sequence belongs to the transcriptional regulatory CopG/NikR family. The cofactor is Ni(2+).

In terms of biological role, transcriptional regulator. This Anaeromyxobacter dehalogenans (strain 2CP-1 / ATCC BAA-258) protein is Putative nickel-responsive regulator.